The following is a 520-amino-acid chain: Cytochrome P450 4F8 (520 aa).

The chain crosses the membrane as a helical span at residues 15–37 (AASPWLLLLVVGASWLLARILAW). Heme is bound at residue C468.

It belongs to the cytochrome P450 family. Requires heme as cofactor. As to expression, expressed in the epithelium of seminal vesicles, in renal cortex, in adult and fetal liver, in epidermis, in corneal epithelium, in sweat glands, hair follicles, epithelial linings of the ampulla of vas deferens and of the stomach and small intestine, as well as in the transitional epithelium of the bladder and ureter (at protein level). In the epidermis, expressed from the basal cell to the granular cell layers. In the corneal epithelium, expressed in all cell layers. Also detected in prostate. Up-regulated in the epidermis of psoriatic lesions.

It localises to the endoplasmic reticulum membrane. Its subcellular location is the microsome membrane. The enzyme catalyses an organic molecule + reduced [NADPH--hemoprotein reductase] + O2 = an alcohol + oxidized [NADPH--hemoprotein reductase] + H2O + H(+). The catalysed reaction is (5Z,8Z,11Z,14Z)-eicosatetraenoate + reduced [NADPH--hemoprotein reductase] + O2 = (18R)-hydroxy-(5Z,8Z,11Z,14Z)-eicosatetraenoate + oxidized [NADPH--hemoprotein reductase] + H2O + H(+). It carries out the reaction (4Z,7Z,10Z,13Z,16Z)-docosapentaenoate + reduced [NADPH--hemoprotein reductase] + O2 = 20-hydroxy-(4Z,7Z,10Z,13Z,16Z)-docosapentaenoate + oxidized [NADPH--hemoprotein reductase] + H2O + H(+). It catalyses the reaction prostaglandin H1 + reduced [NADPH--hemoprotein reductase] + O2 = 19-hydroxyprostaglandin H1 + oxidized [NADPH--hemoprotein reductase] + H2O + H(+). The enzyme catalyses prostaglandin H2 + reduced [NADPH--hemoprotein reductase] + O2 = 19-hydroxyprostaglandin H2 + oxidized [NADPH--hemoprotein reductase] + H2O + H(+). The catalysed reaction is prostaglandin I2 + reduced [NADPH--hemoprotein reductase] + O2 = 19-hydroxy-prostaglandin I2 + oxidized [NADPH--hemoprotein reductase] + H2O + H(+). It carries out the reaction (4Z,7Z,10Z,13Z,16Z,19Z)-docosahexaenoate + reduced [NADPH--hemoprotein reductase] + O2 = 10,11-epoxy-(4Z,7Z,13Z,16Z,19Z)-docosapentaenoate + oxidized [NADPH--hemoprotein reductase] + H2O + H(+). It catalyses the reaction (4Z,7Z,10Z,13Z,16Z,19Z)-docosahexaenoate + reduced [NADPH--hemoprotein reductase] + O2 = 13,14-epoxy-(4Z,7Z,10Z,16Z,19Z)-docosapentaenoate + oxidized [NADPH--hemoprotein reductase] + H2O + H(+). The enzyme catalyses (4Z,7Z,10Z,13Z,16Z,19Z)-docosahexaenoate + reduced [NADPH--hemoprotein reductase] + O2 = 16,17-epoxy-(4Z,7Z,10Z,13Z,19Z)-docosapentaenoate + oxidized [NADPH--hemoprotein reductase] + H2O + H(+). The catalysed reaction is (4Z,7Z,10Z,13Z,16Z,19Z)-docosahexaenoate + reduced [NADPH--hemoprotein reductase] + O2 = 19,20-epoxy-(4Z,7Z,10Z,13Z,16Z)-docosapentaenoate + oxidized [NADPH--hemoprotein reductase] + H2O + H(+). It carries out the reaction (7Z,10Z,13Z,16Z,19Z)-docosapentaenoate + reduced [NADPH--hemoprotein reductase] + O2 = 10,11-epoxy-(7Z,13Z,16Z,19Z)-docosatetraenoate + oxidized [NADPH--hemoprotein reductase] + H2O + H(+). It catalyses the reaction (7Z,10Z,13Z,16Z,19Z)-docosapentaenoate + reduced [NADPH--hemoprotein reductase] + O2 = 13,14-epoxy-(7Z,10Z,16Z,19Z)-docosatetraenoate + oxidized [NADPH--hemoprotein reductase] + H2O + H(+). The enzyme catalyses (7Z,10Z,13Z,16Z,19Z)-docosapentaenoate + reduced [NADPH--hemoprotein reductase] + O2 = 16,17-epoxy-(7Z,10Z,13Z,19Z)-docosatetraenoate + oxidized [NADPH--hemoprotein reductase] + H2O + H(+). The catalysed reaction is (7Z,10Z,13Z,16Z,19Z)-docosapentaenoate + reduced [NADPH--hemoprotein reductase] + O2 = 19,20-epoxy-(7Z,10Z,13Z,16Z)-docosatetraenoate + oxidized [NADPH--hemoprotein reductase] + H2O + H(+). It participates in lipid metabolism; fatty acid metabolism. A cytochrome P450 monooxygenase involved in the metabolism of endogenous polyunsaturated fatty acids (PUFAs) and their oxygenated derivatives (oxylipins). Mechanistically, uses molecular oxygen inserting one oxygen atom into a substrate, and reducing the second into a water molecule, with two electrons provided by NADPH via cytochrome P450 reductase (CPR; NADPH-ferrihemoprotein reductase). Catalyzes the hydroxylation of carbon hydrogen bonds, with preference for omega-1 and omega-2 positions. Hydroxylates (5Z,8Z,11Z,14Z)-eicosatetraenoic acid (arachidonate) predominantly at omega-2 position to form (18R)-hydroxyeicosatetraenoic acid (18R-HETE). Exhibits omega-1 hydroxylase activity toward prostaglandin (PG) H1, PGH2 and PGI2. Catalyzes the epoxidation of double bonds of PUFAs, including docosahexaenoic and docosapentaenoic acids. Shows little activity against PGD2, PGE1, PGE2, PGF2alpha, and leukotriene B4. This Homo sapiens (Human) protein is Cytochrome P450 4F8.